A 440-amino-acid chain; its full sequence is Adenylyltransferase and sulfurtransferase UBA4 (440 aa).

M1 is subject to N-acetylmethionine. ATP-binding positions include G77, D98, 105–109 (SNLHR), K122, and 166–167 (DS). Zn(2+)-binding residues include C208 and C211. C225 acts as the Glycyl thioester intermediate; for adenylyltransferase activity in catalysis. Zn(2+) contacts are provided by C286 and C289. A Phosphoserine modification is found at S326. The Rhodanese domain maps to 339 to 438 (FLAKHIFLDV…YIDDIDQTIP (100 aa)). C397 acts as the Cysteine persulfide intermediate; for sulfurtransferase activity in catalysis.

It in the N-terminal section; belongs to the HesA/MoeB/ThiF family. UBA4 subfamily. Zn(2+) serves as cofactor.

Its subcellular location is the cytoplasm. The protein localises to the cytosol. The protein operates within tRNA modification; 5-methoxycarbonylmethyl-2-thiouridine-tRNA biosynthesis. Its function is as follows. Plays a central role in 2-thiolation of mcm(5)S(2)U at tRNA wobble positions of cytosolic tRNA(Lys), tRNA(Glu) and tRNA(Gln). Acts by mediating the C-terminal thiocarboxylation of sulfur carrier URM1. Its N-terminus first activates URM1 as acyl-adenylate (-COAMP), then the persulfide sulfur on the catalytic cysteine is transferred to URM1 to form thiocarboxylation (-COSH) of its C-terminus. The reaction probably involves hydrogen sulfide that is generated from the persulfide intermediate and that acts as a nucleophile towards URM1. Subsequently, a transient disulfide bond is formed. Does not use thiosulfate as sulfur donor; NFS1 probably acting as a sulfur donor for thiocarboxylation reactions. Prior mcm(5) tRNA modification by the elongator complex is required for 2-thiolation. May also be involved in protein urmylation. The protein is Adenylyltransferase and sulfurtransferase UBA4 of Saccharomyces cerevisiae (strain RM11-1a) (Baker's yeast).